The sequence spans 492 residues: Catalase isozyme 1 (492 aa).

Residues His65 and Asn138 contribute to the active site. Tyr348 contributes to the heme binding site.

The protein belongs to the catalase family. In terms of assembly, homotetramer. Heme serves as cofactor.

It localises to the peroxisome. It carries out the reaction 2 H2O2 = O2 + 2 H2O. In terms of biological role, occurs in almost all aerobically respiring organisms and serves to protect cells from the toxic effects of hydrogen peroxide. This is Catalase isozyme 1 (CAT1) from Solanum lycopersicum (Tomato).